Consider the following 141-residue polypeptide: Calcium-binding protein SPEC 2D (141 aa).

4 consecutive EF-hand domains span residues 10-42 (DQIK…MKSV), 43-72 (GHVL…AMIL), 73-107 (DKKC…FDRQ), and 108-141 (ITED…MNFC). Ca(2+)-binding residues include aspartate 23, asparagine 25, aspartate 27, and asparagine 29. Residues aspartate 84, aspartate 86, lysine 90, aspartate 95, aspartate 121, aspartate 125, lysine 127, and glutamate 132 each coordinate Ca(2+).

In terms of tissue distribution, found in cell lineages giving rise to the aboral ectoderm, a squamous epithelium covering the surface of the late stage embryo and larva.

Its function is as follows. Calcium-binding protein involved in larval development and metamorphosis. Likely to function as calcium buffers mediating the transport of calcium from the sea water to the blastocoel where calcium is required for skeleton formation. The sequence is that of Calcium-binding protein SPEC 2D (SPEC2D) from Strongylocentrotus purpuratus (Purple sea urchin).